The sequence spans 101 residues: NAD(P)H-quinone oxidoreductase subunit 4L, chloroplastic (101 aa).

3 helical membrane passes run 2-22 (MTEHVLILSAYLFSIGIYGLI), 32-52 (MCLELILNAVNLNLVTFSDLF), and 61-81 (IFSIFVIAIAAAEAAIGPAIV).

Belongs to the complex I subunit 4L family. NDH is composed of at least 16 different subunits, 5 of which are encoded in the nucleus.

Its subcellular location is the plastid. It localises to the chloroplast thylakoid membrane. It catalyses the reaction a plastoquinone + NADH + (n+1) H(+)(in) = a plastoquinol + NAD(+) + n H(+)(out). The enzyme catalyses a plastoquinone + NADPH + (n+1) H(+)(in) = a plastoquinol + NADP(+) + n H(+)(out). Functionally, NDH shuttles electrons from NAD(P)H:plastoquinone, via FMN and iron-sulfur (Fe-S) centers, to quinones in the photosynthetic chain and possibly in a chloroplast respiratory chain. The immediate electron acceptor for the enzyme in this species is believed to be plastoquinone. Couples the redox reaction to proton translocation, and thus conserves the redox energy in a proton gradient. This Liriodendron tulipifera (Tuliptree) protein is NAD(P)H-quinone oxidoreductase subunit 4L, chloroplastic.